The primary structure comprises 536 residues: GMP synthase [glutamine-hydrolyzing] (536 aa).

The 194-residue stretch at 19–212 folds into the Glutamine amidotransferase type-1 domain; the sequence is RILILDFGSQ…VHEICDCAGS (194 aa). Cysteine 96 acts as the Nucleophile in catalysis. Catalysis depends on residues histidine 186 and glutamate 188. A GMPS ATP-PPase domain is found at 213 to 411; the sequence is WTPDNIIDMR…LGLPAKMINR (199 aa). Position 240–246 (240–246) interacts with ATP; that stretch reads SGGVDSS.

In terms of assembly, homodimer.

The enzyme catalyses XMP + L-glutamine + ATP + H2O = GMP + L-glutamate + AMP + diphosphate + 2 H(+). It functions in the pathway purine metabolism; GMP biosynthesis; GMP from XMP (L-Gln route): step 1/1. In terms of biological role, catalyzes the synthesis of GMP from XMP. This chain is GMP synthase [glutamine-hydrolyzing], found in Psychrobacter arcticus (strain DSM 17307 / VKM B-2377 / 273-4).